The following is a 146-amino-acid chain: Hemoglobin subunit beta-1 (146 aa).

Residues 2–146 enclose the Globin domain; the sequence is EWSSNERSTI…VISALSRQYF (145 aa). Heme b contacts are provided by histidine 63 and histidine 92.

Belongs to the globin family. Heterotetramer of two alpha chains and two beta chains. As to expression, red blood cells.

Its function is as follows. Involved in oxygen transport from gills to the various peripheral tissues. The polypeptide is Hemoglobin subunit beta-1 (hbb1) (Muraena helena (Mediterranean moray)).